The chain runs to 23 residues: ENFAGGCATGYLRTADGRCKPTF.

Cysteine 7 and cysteine 19 are disulfide-bonded.

It belongs to the GBP/PSP1/paralytic peptide family. In terms of tissue distribution, hemolymph.

Its function is as follows. Causes rapid, rigid paralysis when injected into Lepidopteran larvae. The physiological role may be to reduce hemolymph loss following injury and promote wound healing. The protein is Paralytic peptide 1 of Manduca sexta (Tobacco hawkmoth).